Reading from the N-terminus, the 228-residue chain is MADS-box transcription factor 22 (228 aa).

In terms of domain architecture, MADS-box spans 1-61 (MARERREIKR…GKLSHFASSS (61 aa)). The 91-residue stretch at 86–176 (LNLEHSKYAH…RNQVSQISPA (91 aa)) folds into the K-box domain. Positions 189–217 (EGQSSESVMTALHSGSSQSQDNDDGSDVS) are disordered.

In terms of tissue distribution, expressed in palea and stamen primordia. Expressed in shoots and coleoptiles.

Its subcellular location is the nucleus. Functionally, probable transcription factor. May be required for spikelet (rice flower) development. Transcription factor that functions to support the MADS55 in its function as negative regulator of brassinosteroid signaling. The protein is MADS-box transcription factor 22 (MADS22) of Oryza sativa subsp. japonica (Rice).